We begin with the raw amino-acid sequence, 66 residues long: Large ribosomal subunit protein uL29 (66 aa).

It belongs to the universal ribosomal protein uL29 family.

This Thermoplasma volcanium (strain ATCC 51530 / DSM 4299 / JCM 9571 / NBRC 15438 / GSS1) protein is Large ribosomal subunit protein uL29.